We begin with the raw amino-acid sequence, 282 residues long: E3 ubiquitin-protein ligase SIAH1 (282 aa).

Positions 1–17 are enriched in polar residues; sequence MSRQTATALPTGTSKCP. The segment at 1 to 22 is disordered; the sequence is MSRQTATALPTGTSKCPPSQRV. A Phosphoserine; by ATM and ATR modification is found at S19. The RING-type zinc-finger motif lies at 41–76; the sequence is CPVCFDYVLPPILQCQSGHLVCSNCRPKLTCCPTCR. The interval 90 to 282 is SBD; that stretch reads VANSVLFPCK…LGINVTISMC (193 aa). The SIAH-type zinc finger occupies 93-153; sequence SVLFPCKYAS…VMPHLMHQHK (61 aa). C98, C105, H117, C121, C128, C135, H147, and H152 together coordinate Zn(2+).

The protein belongs to the SINA (Seven in absentia) family. As to quaternary structure, homodimer. Component of some large E3 complex composed of UBE2D1, SIAH1, CACYBP/SIP, SKP1, APC and TBL1X. Interacts with UBE2I. Interacts with alpha-tubulin. Interacts with PEG10, which may inhibit its activity. Interacts with PEG3 and HIPK2. Interacts with group 1 glutamate receptors GRM1 and GRM5. Interacts with DAB1, which may inhibit its activity. Interacts with UBE2E2. Interacts with SNCAIP. Interacts with HIPK2; the interaction is promoted by DAZAP2 and results in SIAH1-mediated ubiquitination and subsequent proteasomal degradation of HIPK2. Interacts with DAZAP2; the interaction is decreased following phosphorylation of DAZAP2 by HIPK2. Interacts with GAPDH; leading to stabilize SIAH1. Interacts with Bassoon/BSN and Piccolo/PLCO; these interactions negatively regulate SIAH1 E3 ligase activity. Interacts with DCC. Interacts with AXIN1; catalyzes AXIN1 ubiquitination and subsequent proteasome-mediated ubiquitin-dependent degradation. In terms of processing, phosphorylated on Ser-19 by ATM and ATR. This phosphorylation disrupts SIAH1 interaction with HIPK2, and subsequent proteasomal degradation of HIPK2.

It is found in the cytoplasm. It localises to the nucleus. It catalyses the reaction S-ubiquitinyl-[E2 ubiquitin-conjugating enzyme]-L-cysteine + [acceptor protein]-L-lysine = [E2 ubiquitin-conjugating enzyme]-L-cysteine + N(6)-ubiquitinyl-[acceptor protein]-L-lysine.. It participates in protein modification; protein ubiquitination. In terms of biological role, E3 ubiquitin-protein ligase that mediates ubiquitination and subsequent proteasomal degradation of target proteins. E3 ubiquitin ligases accept ubiquitin from an E2 ubiquitin-conjugating enzyme in the form of a thioester and then directly transfers the ubiquitin to targeted substrates. Mediates E3 ubiquitin ligase activity either through direct binding to substrates or by functioning as the essential RING domain subunit of larger E3 complexes. Triggers the ubiquitin-mediated degradation of many substrates, including proteins involved in transcription regulation (ELL2, MYB, POU2AF1, PML and RBBP8), a cell surface receptor (DCC), cytoplasmic signal transduction molecules (KLF10/TIEG1 and NUMB), an antiapoptotic protein (BAG1), a microtubule motor protein (KIF22), a protein involved in synaptic vesicle function in neurons (SYP), a structural protein (CTNNB1) and SNCAIP. Confers constitutive instability to HIPK2 through proteasomal degradation. It is thereby involved in many cellular processes such as apoptosis, tumor suppression, cell cycle, axon guidance, transcription, spermatogenesis and TNF-alpha signaling. Has some overlapping function with SIAH2. Induces apoptosis in cooperation with PEG3. Upon nitric oxid (NO) generation that follows apoptotic stimulation, interacts with S-nitrosylated GAPDH, mediating the translocation of GAPDH to the nucleus. GAPDH acts as a stabilizer of SIAH1, facilitating the degradation of nuclear proteins. Mediates ubiquitination and degradation of EGLN2 and EGLN3 in response to the unfolded protein response (UPR), leading to their degradation and subsequent stabilization of ATF4. Also part of the Wnt signaling pathway in which it mediates the Wnt-induced ubiquitin-mediated proteasomal degradation of AXIN1. The protein is E3 ubiquitin-protein ligase SIAH1 (Siah1) of Rattus norvegicus (Rat).